A 121-amino-acid polypeptide reads, in one-letter code: Phosphoribosyl-AMP cyclohydrolase (121 aa).

Aspartate 74 contacts Mg(2+). Cysteine 75 contributes to the Zn(2+) binding site. Mg(2+) is bound by residues aspartate 76 and aspartate 78. Positions 91 and 98 each coordinate Zn(2+).

The protein belongs to the PRA-CH family. Homodimer. Requires Mg(2+) as cofactor. It depends on Zn(2+) as a cofactor.

The protein resides in the cytoplasm. It carries out the reaction 1-(5-phospho-beta-D-ribosyl)-5'-AMP + H2O = 1-(5-phospho-beta-D-ribosyl)-5-[(5-phospho-beta-D-ribosylamino)methylideneamino]imidazole-4-carboxamide. The protein operates within amino-acid biosynthesis; L-histidine biosynthesis; L-histidine from 5-phospho-alpha-D-ribose 1-diphosphate: step 3/9. In terms of biological role, catalyzes the hydrolysis of the adenine ring of phosphoribosyl-AMP. The protein is Phosphoribosyl-AMP cyclohydrolase of Methanothrix thermoacetophila (strain DSM 6194 / JCM 14653 / NBRC 101360 / PT) (Methanosaeta thermophila).